Here is a 547-residue protein sequence, read N- to C-terminus: Chaperonin GroEL (547 aa).

Residues 30 to 33 (TLGP), lysine 51, 87 to 91 (DGTTT), glycine 415, 479 to 481 (NAA), and aspartate 495 each bind ATP.

Belongs to the chaperonin (HSP60) family. Forms a cylinder of 14 subunits composed of two heptameric rings stacked back-to-back. Interacts with the co-chaperonin GroES.

The protein resides in the cytoplasm. It carries out the reaction ATP + H2O + a folded polypeptide = ADP + phosphate + an unfolded polypeptide.. Functionally, together with its co-chaperonin GroES, plays an essential role in assisting protein folding. The GroEL-GroES system forms a nano-cage that allows encapsulation of the non-native substrate proteins and provides a physical environment optimized to promote and accelerate protein folding. The polypeptide is Chaperonin GroEL (Pseudomonas fluorescens (strain ATCC BAA-477 / NRRL B-23932 / Pf-5)).